Here is a 283-residue protein sequence, read N- to C-terminus: Elongation factor Ts (283 aa).

The tract at residues 79–82 (TDFV) is involved in Mg(2+) ion dislocation from EF-Tu.

The protein belongs to the EF-Ts family.

It localises to the cytoplasm. Associates with the EF-Tu.GDP complex and induces the exchange of GDP to GTP. It remains bound to the aminoacyl-tRNA.EF-Tu.GTP complex up to the GTP hydrolysis stage on the ribosome. This is Elongation factor Ts from Shewanella oneidensis (strain ATCC 700550 / JCM 31522 / CIP 106686 / LMG 19005 / NCIMB 14063 / MR-1).